A 188-amino-acid polypeptide reads, in one-letter code: Thymidine kinase (188 aa).

ATP is bound at residue 17-24 (GPMFAGKT). Residue glutamate 92 is the Proton acceptor of the active site. Phenylalanine 121 serves as a coordination point for substrate. Zn(2+) contacts are provided by cysteine 146 and cysteine 149. Residue 166 to 170 (LILAG) coordinates substrate. Cysteine 179 and cysteine 182 together coordinate Zn(2+).

It belongs to the thymidine kinase family.

It carries out the reaction thymidine + ATP = dTMP + ADP + H(+). Its function is as follows. Phosphorylates thymidine. ASFV replicates in the cytoplasm of infected cells and contains genes encoding a number of enzymes needed for DNA synthesis, including thymidine kinase. Important for growth in swine macrophages in vitro and is a virus virulence factor in swine. The protein is Thymidine kinase of Ornithodoros (relapsing fever ticks).